Reading from the N-terminus, the 509-residue chain is DEAD-box ATP-dependent RNA helicase CshA (509 aa).

Positions 2–30 (QNFKELGISDKTVQTLEAMGFKEPTPIQK) match the Q motif motif. A Helicase ATP-binding domain is found at 33–203 (IPYALEGDDI…QQFMKAPKII (171 aa)). 46–53 (AQTGTGKT) is an ATP binding site. The DEAD box motif lies at 150–153 (DEAD). A Helicase C-terminal domain is found at 214–375 (QIDEYYTIVK…LRPPHRKEVL (162 aa)). 2 stretches are compositionally biased toward basic residues: residues 440–459 (ARKNRSSKGGSRRSNHKRGN) and 467–482 (RRSKGSKGQSSKKKNQ). The segment at 440-509 (ARKNRSSKGG…KGRTFADHQK (70 aa)) is disordered. Over residues 483-492 (KKFDRRDKQQ) the composition is skewed to basic and acidic residues.

This sequence belongs to the DEAD box helicase family. CshA subfamily. Oligomerizes, may be a member of the RNA degradosome.

Its subcellular location is the cytoplasm. The enzyme catalyses ATP + H2O = ADP + phosphate + H(+). DEAD-box RNA helicase possibly involved in RNA degradation. Unwinds dsRNA in both 5'- and 3'-directions, has RNA-dependent ATPase activity. The chain is DEAD-box ATP-dependent RNA helicase CshA from Staphylococcus epidermidis (strain ATCC 35984 / DSM 28319 / BCRC 17069 / CCUG 31568 / BM 3577 / RP62A).